A 254-amino-acid polypeptide reads, in one-letter code: Triosephosphate isomerase (254 aa).

9–11 (NWK) is a substrate binding site. H95 functions as the Electrophile in the catalytic mechanism. The active-site Proton acceptor is E167. Residues G173, S213, and 234–235 (GG) each bind substrate.

It belongs to the triosephosphate isomerase family. In terms of assembly, homodimer.

The protein localises to the cytoplasm. The catalysed reaction is D-glyceraldehyde 3-phosphate = dihydroxyacetone phosphate. It functions in the pathway carbohydrate biosynthesis; gluconeogenesis. The protein operates within carbohydrate degradation; glycolysis; D-glyceraldehyde 3-phosphate from glycerone phosphate: step 1/1. Its function is as follows. Involved in the gluconeogenesis. Catalyzes stereospecifically the conversion of dihydroxyacetone phosphate (DHAP) to D-glyceraldehyde-3-phosphate (G3P). This chain is Triosephosphate isomerase, found in Roseiflexus sp. (strain RS-1).